The sequence spans 907 residues: Protein translocase subunit SecA (907 aa).

Residues glutamine 87, 105–109, and aspartate 513 each bind ATP; that span reads GEGKT. Basic and acidic residues predominate over residues 841–853; the sequence is EAQRRAQAEEAAR. Residues 841–907 are disordered; it reads EAQRRAQAEE…KYKQCHGQIN (67 aa). Over residues 854-865 the composition is skewed to low complexity; the sequence is RAQAQHASAQSQ. The segment covering 872 to 887 has biased composition (basic and acidic residues); that stretch reads EGHHQPVVRDERKVGR. Positions 891, 893, 902, and 903 each coordinate Zn(2+).

Belongs to the SecA family. Monomer and homodimer. Part of the essential Sec protein translocation apparatus which comprises SecA, SecYEG and auxiliary proteins SecDF-YajC and YidC. Zn(2+) is required as a cofactor.

The protein localises to the cell inner membrane. It localises to the cytoplasm. The enzyme catalyses ATP + H2O + cellular proteinSide 1 = ADP + phosphate + cellular proteinSide 2.. Functionally, part of the Sec protein translocase complex. Interacts with the SecYEG preprotein conducting channel. Has a central role in coupling the hydrolysis of ATP to the transfer of proteins into and across the cell membrane, serving both as a receptor for the preprotein-SecB complex and as an ATP-driven molecular motor driving the stepwise translocation of polypeptide chains across the membrane. This Vibrio vulnificus (strain CMCP6) protein is Protein translocase subunit SecA.